Here is a 380-residue protein sequence, read N- to C-terminus: Opsin-2 (380 aa).

Residues 1-51 (MVNTTDFYPVPAAMAYESSVGLPLLGWNVPTEHLDLVHPHWRSFQVPNKYW) are Extracellular-facing. Asparagine 3 carries an N-linked (GlcNAc...) asparagine glycan. A helical membrane pass occupies residues 52–76 (HFGLAFVYFMLMCMSSLGNGIVLWI). The Cytoplasmic segment spans residues 77 to 88 (YATTKSIRTPSN). A helical membrane pass occupies residues 89–115 (MFIVNLALFDVLMLLEMPMLVVSSLFY). Topologically, residues 116 to 128 (QRPVGWELGCDIY) are extracellular. Cysteine 125 and cysteine 202 are oxidised to a cystine. Residues 129–148 (AALGSVAGIGSAINNAAIAF) form a helical membrane-spanning segment. Residues 149-166 (DRYRTISCPIDGRLTQGQ) are Cytoplasmic-facing. A helical transmembrane segment spans residues 167-191 (VLALIAGTWVWTLPFTLMPLLRIWS). The Extracellular segment spans residues 192-215 (RFTAEGFLTTCSFDYLTDDEDTKV). Residues 216-243 (FVGCIFAWSYAFPLCLICCFYYRLIGAV) form a helical membrane-spanning segment. Residues 244–279 (REHEKMLRDQAKKMNVKSLQSNADTEAQSAEIRIAK) are Cytoplasmic-facing. Residues 280–303 (VALTIFFLFLCSWTPYAVVAMIGA) traverse the membrane as a helical segment. Residues 304-311 (FGNRAALT) are Extracellular-facing. The helical transmembrane segment at 312–336 (PLSTMIPAVTAKIVSCIDPWVYAIN) threads the bilayer. Residue lysine 323 is modified to N6-(retinylidene)lysine. Over 337-380 (HPRFRAEVQKRMKWLHLGEDARSSKSDTSSTATDRTVGNVSASA) the chain is Cytoplasmic. Residues 358–380 (RSSKSDTSSTATDRTVGNVSASA) are disordered. Residues 362 to 372 (SDTSSTATDRT) are compositionally biased toward low complexity.

Belongs to the G-protein coupled receptor 1 family. Opsin subfamily. In terms of processing, phosphorylated on some or all of the serine and threonine residues present in the C-terminal region.

The protein localises to the membrane. Visual pigments are the light-absorbing molecules that mediate vision. They consist of an apoprotein, opsin, covalently linked to cis-retinal. This is Opsin-2 (Lo2) from Schistocerca gregaria (Desert locust).